The chain runs to 486 residues: Protein nucleotidyltransferase YdiU (486 aa).

The ATP site is built by Gly89, Gly91, Arg92, Lys112, Asp124, Gly125, Arg175, and Arg182. Asp251 (proton acceptor) is an active-site residue. Mg(2+)-binding residues include Asn252 and Asp261. Asp261 contacts ATP.

This sequence belongs to the SELO family. It depends on Mg(2+) as a cofactor. Mn(2+) serves as cofactor.

The enzyme catalyses L-seryl-[protein] + ATP = 3-O-(5'-adenylyl)-L-seryl-[protein] + diphosphate. It carries out the reaction L-threonyl-[protein] + ATP = 3-O-(5'-adenylyl)-L-threonyl-[protein] + diphosphate. The catalysed reaction is L-tyrosyl-[protein] + ATP = O-(5'-adenylyl)-L-tyrosyl-[protein] + diphosphate. It catalyses the reaction L-histidyl-[protein] + UTP = N(tele)-(5'-uridylyl)-L-histidyl-[protein] + diphosphate. The enzyme catalyses L-seryl-[protein] + UTP = O-(5'-uridylyl)-L-seryl-[protein] + diphosphate. It carries out the reaction L-tyrosyl-[protein] + UTP = O-(5'-uridylyl)-L-tyrosyl-[protein] + diphosphate. Nucleotidyltransferase involved in the post-translational modification of proteins. It can catalyze the addition of adenosine monophosphate (AMP) or uridine monophosphate (UMP) to a protein, resulting in modifications known as AMPylation and UMPylation. The sequence is that of Protein nucleotidyltransferase YdiU from Shouchella clausii (strain KSM-K16) (Alkalihalobacillus clausii).